Consider the following 168-residue polypeptide: Pathogenesis-related protein 1B (168 aa).

An N-terminal signal peptide occupies residues 1 to 30 (MGFFLFSQMPSFFLVSTLLLFLIISHSSHA). Positions 38-156 (LDAHNTARAD…NGGYVVSCNY (119 aa)) constitute an SCP domain.

The protein belongs to the CRISP family. In terms of processing, three disulfide bonds are present.

It is found in the vacuole. Its function is as follows. Probably involved in the defense reaction of plants against pathogens. This is Pathogenesis-related protein 1B from Nicotiana tabacum (Common tobacco).